The following is a 408-amino-acid chain: MNAPFEKDRRNRRVAVVVVAAGRGERAGQAQNGPKQYRLIGGKPVIRHTLEVLAKSKRVGTIAVAVHPEDSSLFNQAREGLDGDIRAVHGGASRQESTRLALAALEEVKPDIVLIHDGVRPFIDEALIERVIEAVGEDSGALPALPVSDTLKRSGVNGIITGTVPRDGLFAAQTPQGFPFRPIYEAHQKAWQSGRSDFTDDAAIAEWAGISVRLVSGSPDNVKLTWAKDIALADQRLGPAMTELPDIRVGNGYDVHGFGPGGHVTLCGVQIPHGKTLMGHSDADVGLHALTDALLATCGAGDIGTHFPPSDPQWKGAKSRIFVEHAVNLLRARGGRIANADVTLICEAPRIGPYREAMLAELSDMLQISPERVSVKATTNEGLGFIGRAEGIAAIATATVAYPGSLGN.

Residues 1–247 (MNAPFEKDRR…GPAMTELPDI (247 aa)) form a 2-C-methyl-D-erythritol 4-phosphate cytidylyltransferase region. The tract at residues 248–408 (RVGNGYDVHG…TVAYPGSLGN (161 aa)) is 2-C-methyl-D-erythritol 2,4-cyclodiphosphate synthase. Residues Asp254 and His256 each coordinate a divalent metal cation. Residues 254-256 (DVH) and 280-281 (HS) contribute to the 4-CDP-2-C-methyl-D-erythritol 2-phosphate site. His288 serves as a coordination point for a divalent metal cation. 4-CDP-2-C-methyl-D-erythritol 2-phosphate-binding positions include 302 to 304 (DIG), 378 to 381 (TTNE), Phe385, and Arg388.

It in the N-terminal section; belongs to the IspD/TarI cytidylyltransferase family. IspD subfamily. In the C-terminal section; belongs to the IspF family. A divalent metal cation serves as cofactor.

It catalyses the reaction 2-C-methyl-D-erythritol 4-phosphate + CTP + H(+) = 4-CDP-2-C-methyl-D-erythritol + diphosphate. The enzyme catalyses 4-CDP-2-C-methyl-D-erythritol 2-phosphate = 2-C-methyl-D-erythritol 2,4-cyclic diphosphate + CMP. It functions in the pathway isoprenoid biosynthesis; isopentenyl diphosphate biosynthesis via DXP pathway; isopentenyl diphosphate from 1-deoxy-D-xylulose 5-phosphate: step 2/6. The protein operates within isoprenoid biosynthesis; isopentenyl diphosphate biosynthesis via DXP pathway; isopentenyl diphosphate from 1-deoxy-D-xylulose 5-phosphate: step 4/6. In terms of biological role, bifunctional enzyme that catalyzes the formation of 4-diphosphocytidyl-2-C-methyl-D-erythritol from CTP and 2-C-methyl-D-erythritol 4-phosphate (MEP) (IspD), and catalyzes the conversion of 4-diphosphocytidyl-2-C-methyl-D-erythritol 2-phosphate (CDP-ME2P) to 2-C-methyl-D-erythritol 2,4-cyclodiphosphate (ME-CPP) with a corresponding release of cytidine 5-monophosphate (CMP) (IspF). This chain is Bifunctional enzyme IspD/IspF, found in Chelativorans sp. (strain BNC1).